The following is a 614-amino-acid chain: uncharacterized protein (614 aa).

A run of 2 helical transmembrane segments spans residues 494 to 516 (VAYWSFGALCIAVPIALILGSTL) and 552 to 574 (LLIGTGVAVGVAVILSINFIVHA). The disordered stretch occupies residues 588-614 (AVRPRADKDIQTLTHRDEAEEDQEEDS). Basic and acidic residues predominate over residues 591–605 (PRADKDIQTLTHRDE).

It localises to the cell membrane. This is an uncharacterized protein from Treponema pallidum (strain Nichols).